The chain runs to 182 residues: Adenylate kinase (182 aa).

ATP is bound at residue G12–T17. Residues S32–V61 form an NMP region. AMP contacts are provided by residues T33, R38, E59–V61, G85–R88, and Q92. An LID region spans residues E126–D132. An ATP-binding site is contributed by R127. R129 and R140 together coordinate AMP. A168 provides a ligand contact to ATP.

Belongs to the adenylate kinase family. As to quaternary structure, monomer.

It is found in the cytoplasm. The enzyme catalyses AMP + ATP = 2 ADP. Its pathway is purine metabolism; AMP biosynthesis via salvage pathway; AMP from ADP: step 1/1. In terms of biological role, catalyzes the reversible transfer of the terminal phosphate group between ATP and AMP. Plays an important role in cellular energy homeostasis and in adenine nucleotide metabolism. The chain is Adenylate kinase from Prochlorococcus marinus (strain NATL1A).